The primary structure comprises 551 residues: Methionine--tRNA ligase (551 aa).

A 'HIGH' region motif is present at residues 12–22; it reads PYANGPLHFGH. Zn(2+) is bound by residues Cys-144, Cys-147, Cys-157, and Cys-160. A 'KMSKS' region motif is present at residues 330–334; it reads QFSKS. Residue Lys-333 coordinates ATP.

The protein belongs to the class-I aminoacyl-tRNA synthetase family. MetG type 1 subfamily. As to quaternary structure, monomer. The cofactor is Zn(2+).

It localises to the cytoplasm. It catalyses the reaction tRNA(Met) + L-methionine + ATP = L-methionyl-tRNA(Met) + AMP + diphosphate. Is required not only for elongation of protein synthesis but also for the initiation of all mRNA translation through initiator tRNA(fMet) aminoacylation. This Chlamydia abortus (strain DSM 27085 / S26/3) (Chlamydophila abortus) protein is Methionine--tRNA ligase.